A 347-amino-acid chain; its full sequence is Bifunctional dihydroflavonol 4-reductase/flavanone 4-reductase (347 aa).

The NADP(+) site is built by lysine 44 and tyrosine 163.

It belongs to the NAD(P)-dependent epimerase/dehydratase family. Dihydroflavonol-4-reductase subfamily.

It catalyses the reaction a (2R,3S,4S)-leucoanthocyanidin + NADP(+) = a (2R,3R)-dihydroflavonol + NADPH + H(+). The catalysed reaction is (2S)-flavan-4-ol + NADP(+) = (2S)-flavanone + NADPH + H(+). In terms of biological role, bifunctional enzyme involved in the flavonoid metabolism. May use dihydroquercetin, eriodictyol, garbanzol (5-deoxydihydrokaempferol), dihydrofisetin (5-deoxydihydroquercetin), dihydrokaempferol to a low extent (5%), but not naringenin, 5-deoxynaringenin or butin (5-deoxyeriodictyol) as substrate. In Pyrus communis (Pear), this protein is Bifunctional dihydroflavonol 4-reductase/flavanone 4-reductase (DFR).